The primary structure comprises 805 residues: Phenylalanine--tRNA ligase beta subunit (805 aa).

A tRNA-binding domain is found at 39–148; it reads APPFTGVVVA…AALRPGTDIR (110 aa). The 76-residue stretch at 399 to 474 folds into the B5 domain; it reads PVREPVRMRL…RVYGFERIPD (76 aa). Mg(2+) is bound by residues D452, D458, E461, and E462. An FDX-ACB domain is found at 703–804; the sequence is SRQPAVVRDL…LVAAHNARQR (102 aa).

The protein belongs to the phenylalanyl-tRNA synthetase beta subunit family. Type 1 subfamily. In terms of assembly, tetramer of two alpha and two beta subunits. The cofactor is Mg(2+).

The protein resides in the cytoplasm. The enzyme catalyses tRNA(Phe) + L-phenylalanine + ATP = L-phenylalanyl-tRNA(Phe) + AMP + diphosphate + H(+). This Bordetella parapertussis (strain 12822 / ATCC BAA-587 / NCTC 13253) protein is Phenylalanine--tRNA ligase beta subunit.